The chain runs to 382 residues: UDP-N-acetylglucosamine--N-acetylmuramyl-(pentapeptide) pyrophosphoryl-undecaprenol N-acetylglucosamine transferase (382 aa).

UDP-N-acetyl-alpha-D-glucosamine contacts are provided by residues 17 to 19 (TAG), Asn-137, Arg-179, Ser-213, and Gln-308.

It belongs to the glycosyltransferase 28 family. MurG subfamily.

It localises to the cell membrane. The enzyme catalyses di-trans,octa-cis-undecaprenyl diphospho-N-acetyl-alpha-D-muramoyl-L-alanyl-D-glutamyl-meso-2,6-diaminopimeloyl-D-alanyl-D-alanine + UDP-N-acetyl-alpha-D-glucosamine = di-trans,octa-cis-undecaprenyl diphospho-[N-acetyl-alpha-D-glucosaminyl-(1-&gt;4)]-N-acetyl-alpha-D-muramoyl-L-alanyl-D-glutamyl-meso-2,6-diaminopimeloyl-D-alanyl-D-alanine + UDP + H(+). It participates in cell wall biogenesis; peptidoglycan biosynthesis. In terms of biological role, cell wall formation. Catalyzes the transfer of a GlcNAc subunit on undecaprenyl-pyrophosphoryl-MurNAc-pentapeptide (lipid intermediate I) to form undecaprenyl-pyrophosphoryl-MurNAc-(pentapeptide)GlcNAc (lipid intermediate II). The polypeptide is UDP-N-acetylglucosamine--N-acetylmuramyl-(pentapeptide) pyrophosphoryl-undecaprenol N-acetylglucosamine transferase (Rhodococcus jostii (strain RHA1)).